The chain runs to 136 residues: uncharacterized protein (136 aa).

4 helical membrane-spanning segments follow: residues Ser10–Ile32, Leu44–Phe66, Val70–Leu89, and Ile102–Phe124.

It localises to the cell membrane. This is an uncharacterized protein from Archaeoglobus fulgidus (strain ATCC 49558 / DSM 4304 / JCM 9628 / NBRC 100126 / VC-16).